We begin with the raw amino-acid sequence, 419 residues long: Creatine kinase S-type, mitochondrial (419 aa).

The N-terminal 39 residues, 1-39 (MAGTFGRLLAGRVTAALFAAAGSGVLTTGYLLNQQNVKA), are a transit peptide targeting the mitochondrion. One can recognise a Phosphagen kinase N-terminal domain in the interval 46 to 132 (KLFPPSADYP…FDPVIKARHN (87 aa)). One can recognise a Phosphagen kinase C-terminal domain in the interval 159–401 (YVLSSRVRTG…NYLVDCEKKL (243 aa)). ATP is bound by residues 162–166 (SSRVR), His225, Arg270, Arg326, 354–359 (RGTGGV), and Asp369.

It belongs to the ATP:guanido phosphotransferase family. Exists as an octamer composed of four MTCK homodimers. In terms of tissue distribution, expressed in the leg muscle and heart.

The protein localises to the mitochondrion inner membrane. The enzyme catalyses creatine + ATP = N-phosphocreatine + ADP + H(+). Reversibly catalyzes the transfer of phosphate between ATP and various phosphogens (e.g. creatine phosphate). Creatine kinase isoenzymes play a central role in energy transduction in tissues with large, fluctuating energy demands, such as skeletal muscle, heart, brain and spermatozoa. In Gallus gallus (Chicken), this protein is Creatine kinase S-type, mitochondrial (CKMT2).